We begin with the raw amino-acid sequence, 134 residues long: Cytochrome b (134 aa).

A run of 3 helical transmembrane segments spans residues Phe-33–Met-53, Trp-77–Val-98, and Trp-113–Leu-133. The heme b site is built by His-83 and His-97.

The protein belongs to the cytochrome b family. In terms of assembly, the cytochrome bc1 complex contains 11 subunits: 3 respiratory subunits (MT-CYB, CYC1 and UQCRFS1), 2 core proteins (UQCRC1 and UQCRC2) and 6 low-molecular weight proteins (UQCRH/QCR6, UQCRB/QCR7, UQCRQ/QCR8, UQCR10/QCR9, UQCR11/QCR10 and a cleavage product of UQCRFS1). This cytochrome bc1 complex then forms a dimer. Heme b serves as cofactor.

It is found in the mitochondrion inner membrane. Component of the ubiquinol-cytochrome c reductase complex (complex III or cytochrome b-c1 complex) that is part of the mitochondrial respiratory chain. The b-c1 complex mediates electron transfer from ubiquinol to cytochrome c. Contributes to the generation of a proton gradient across the mitochondrial membrane that is then used for ATP synthesis. The chain is Cytochrome b (MT-CYB) from Chiroderma trinitatum (Little big-eyed bat).